Here is a 422-residue protein sequence, read N- to C-terminus: F-box/kelch-repeat protein At3g27150 (422 aa).

One can recognise an F-box domain in the interval 68 to 114 (LLNVPQLVYELEVEILARVPRFEYWKLKLLNKGFSRLLKSDEIFKVR). 5 Kelch repeats span residues 162–212 (ESLC…TCGT), 213–264 (VVFV…YLRG), 266–312 (FYVL…SPPL), 314–361 (AVVG…VAFK), and 366–412 (KLLV…RFNH).

This Arabidopsis thaliana (Mouse-ear cress) protein is F-box/kelch-repeat protein At3g27150.